The following is a 51-amino-acid chain: Large ribosomal subunit protein eL39 (51 aa).

This sequence belongs to the eukaryotic ribosomal protein eL39 family.

This is Large ribosomal subunit protein eL39 from Thermococcus gammatolerans (strain DSM 15229 / JCM 11827 / EJ3).